Reading from the N-terminus, the 473-residue chain is Photosystem II CP43 reaction center protein (473 aa).

The propeptide occupies methionine 1–glutamate 14. Position 15 is an N-acetylthreonine (threonine 15). Threonine 15 carries the post-translational modification Phosphothreonine. 5 helical membrane-spanning segments follow: residues leucine 69 to alanine 93, leucine 134 to serine 155, lysine 178 to threonine 200, lysine 255 to serine 275, and tryptophan 291 to alanine 312. Glutamate 367 contributes to the [CaMn4O5] cluster binding site. The helical transmembrane segment at arginine 447–proline 471 threads the bilayer.

It belongs to the PsbB/PsbC family. PsbC subfamily. In terms of assembly, PSII is composed of 1 copy each of membrane proteins PsbA, PsbB, PsbC, PsbD, PsbE, PsbF, PsbH, PsbI, PsbJ, PsbK, PsbL, PsbM, PsbT, PsbX, PsbY, PsbZ, Psb30/Ycf12, at least 3 peripheral proteins of the oxygen-evolving complex and a large number of cofactors. It forms dimeric complexes. The cofactor is Binds multiple chlorophylls and provides some of the ligands for the Ca-4Mn-5O cluster of the oxygen-evolving complex. It may also provide a ligand for a Cl- that is required for oxygen evolution. PSII binds additional chlorophylls, carotenoids and specific lipids..

It is found in the plastid. Its subcellular location is the chloroplast thylakoid membrane. One of the components of the core complex of photosystem II (PSII). It binds chlorophyll and helps catalyze the primary light-induced photochemical processes of PSII. PSII is a light-driven water:plastoquinone oxidoreductase, using light energy to abstract electrons from H(2)O, generating O(2) and a proton gradient subsequently used for ATP formation. The chain is Photosystem II CP43 reaction center protein from Cycas taitungensis (Prince sago).